Reading from the N-terminus, the 464-residue chain is Trigger factor (464 aa).

The PPIase FKBP-type domain maps to 162 to 243; the sequence is GDFVSIDLSA…VKSVKERELP (82 aa). Residues 431 to 464 form a disordered region; it reads IDTSEFFGKRPSGDGAADEDADQADESTTADAGE. Over residues 446–455 the composition is skewed to acidic residues; sequence AADEDADQAD.

The protein belongs to the FKBP-type PPIase family. Tig subfamily.

The protein resides in the cytoplasm. It carries out the reaction [protein]-peptidylproline (omega=180) = [protein]-peptidylproline (omega=0). Its function is as follows. Involved in protein export. Acts as a chaperone by maintaining the newly synthesized protein in an open conformation. Functions as a peptidyl-prolyl cis-trans isomerase. The sequence is that of Trigger factor from Mycobacterium avium (strain 104).